The primary structure comprises 286 residues: NAD kinase (286 aa).

Residue Asp-74 is the Proton acceptor of the active site. NAD(+) is bound by residues 74-75, 148-149, Asp-178, Ala-186, 189-194, and Gln-244; these read DG, ND, and TAYNLS.

The protein belongs to the NAD kinase family. It depends on a divalent metal cation as a cofactor.

The protein localises to the cytoplasm. It carries out the reaction NAD(+) + ATP = ADP + NADP(+) + H(+). Involved in the regulation of the intracellular balance of NAD and NADP, and is a key enzyme in the biosynthesis of NADP. Catalyzes specifically the phosphorylation on 2'-hydroxyl of the adenosine moiety of NAD to yield NADP. This Campylobacter jejuni subsp. doylei (strain ATCC BAA-1458 / RM4099 / 269.97) protein is NAD kinase.